Here is a 269-residue protein sequence, read N- to C-terminus: uncharacterized protein (269 aa).

The protein belongs to the methyltransferase superfamily.

This is an uncharacterized protein from Mycobacterium leprae (strain Br4923).